Consider the following 532-residue polypeptide: E3 ubiquitin-protein ligase ICP0 (532 aa).

C8, C11, C24, H26, C29, C32, C43, and C46 together coordinate Zn(2+). The RING-type zinc finger occupies 8 to 47; the sequence is CPICLEDPSNYSMALPCLHAFCYVCITRWIRQNPTCPLCK. 4 disordered regions span residues 206–391, 406–426, 461–498, and 510–532; these read EYID…PMRP, APRDSSTSEAAGPSRLGAGPR, EDESARRRGNVLLRPRRQSVPPVPYPDIASTSPLIRQG, and QTQPAEPEEMRCPHNCQRYRRNQ. Composition is skewed to acidic residues over residues 217–227 and 234–243; these read SEEETDSDIEV and DPEDTSDETS. Positions 286-295 are enriched in basic residues; that stretch reads RSARLRRRQP.

Auto-ubiquitinated.

It carries out the reaction S-ubiquitinyl-[E2 ubiquitin-conjugating enzyme]-L-cysteine + [acceptor protein]-L-lysine = [E2 ubiquitin-conjugating enzyme]-L-cysteine + N(6)-ubiquitinyl-[acceptor protein]-L-lysine.. In terms of biological role, evades nuclear antiviral defenses triggered by dsDNA viruses. Acts during the initial stages of lytic infection and the reactivation of latent viral genome. Prevents the antiviral effect of nuclear bodies by degrading host PML and SP100. In Equus caballus (Horse), this protein is E3 ubiquitin-protein ligase ICP0 (63).